Here is a 208-residue protein sequence, read N- to C-terminus: Imidazole glycerol phosphate synthase subunit HisH (208 aa).

Positions 2–208 (NVTIVDYNSG…LKIIENFLNL (207 aa)) constitute a Glutamine amidotransferase type-1 domain. Catalysis depends on cysteine 85, which acts as the Nucleophile. Residues histidine 190 and glutamate 192 contribute to the active site.

As to quaternary structure, heterodimer of HisH and HisF.

Its subcellular location is the cytoplasm. The catalysed reaction is 5-[(5-phospho-1-deoxy-D-ribulos-1-ylimino)methylamino]-1-(5-phospho-beta-D-ribosyl)imidazole-4-carboxamide + L-glutamine = D-erythro-1-(imidazol-4-yl)glycerol 3-phosphate + 5-amino-1-(5-phospho-beta-D-ribosyl)imidazole-4-carboxamide + L-glutamate + H(+). It catalyses the reaction L-glutamine + H2O = L-glutamate + NH4(+). Its pathway is amino-acid biosynthesis; L-histidine biosynthesis; L-histidine from 5-phospho-alpha-D-ribose 1-diphosphate: step 5/9. Its function is as follows. IGPS catalyzes the conversion of PRFAR and glutamine to IGP, AICAR and glutamate. The HisH subunit catalyzes the hydrolysis of glutamine to glutamate and ammonia as part of the synthesis of IGP and AICAR. The resulting ammonia molecule is channeled to the active site of HisF. This chain is Imidazole glycerol phosphate synthase subunit HisH, found in Pelagibacter ubique (strain HTCC1062).